The chain runs to 503 residues: ATP synthase subunit alpha (503 aa).

170–177 (GDRQTGKT) provides a ligand contact to ATP.

Belongs to the ATPase alpha/beta chains family. In terms of assembly, F-type ATPases have 2 components, CF(1) - the catalytic core - and CF(0) - the membrane proton channel. CF(1) has five subunits: alpha(3), beta(3), gamma(1), delta(1), epsilon(1). CF(0) has three main subunits: a(1), b(2) and c(9-12). The alpha and beta chains form an alternating ring which encloses part of the gamma chain. CF(1) is attached to CF(0) by a central stalk formed by the gamma and epsilon chains, while a peripheral stalk is formed by the delta and b chains.

The protein resides in the cell inner membrane. The enzyme catalyses ATP + H2O + 4 H(+)(in) = ADP + phosphate + 5 H(+)(out). Its function is as follows. Produces ATP from ADP in the presence of a proton gradient across the membrane. The alpha chain is a regulatory subunit. The protein is ATP synthase subunit alpha of Thermotoga neapolitana (strain ATCC 49049 / DSM 4359 / NBRC 107923 / NS-E).